A 157-amino-acid chain; its full sequence is MVKHSDPNSKLIAENRRARFDYFIEEEIEAGIILMGSEVKSLRQGGSNIGESYASVENGELWLINGYIAPYLQAKTWGHEERRKRKLLVSRRELARLWNATAREGMTIVPIRMYFNDRGIVKLKIGIAKGKKLSDKRATEAKRDWGREKQRLLKQHS.

A compositionally biased stretch (basic and acidic residues) spans 138-151 (ATEAKRDWGREKQR). The tract at residues 138-157 (ATEAKRDWGREKQRLLKQHS) is disordered.

The protein belongs to the SmpB family.

The protein resides in the cytoplasm. Functionally, required for rescue of stalled ribosomes mediated by trans-translation. Binds to transfer-messenger RNA (tmRNA), required for stable association of tmRNA with ribosomes. tmRNA and SmpB together mimic tRNA shape, replacing the anticodon stem-loop with SmpB. tmRNA is encoded by the ssrA gene; the 2 termini fold to resemble tRNA(Ala) and it encodes a 'tag peptide', a short internal open reading frame. During trans-translation Ala-aminoacylated tmRNA acts like a tRNA, entering the A-site of stalled ribosomes, displacing the stalled mRNA. The ribosome then switches to translate the ORF on the tmRNA; the nascent peptide is terminated with the 'tag peptide' encoded by the tmRNA and targeted for degradation. The ribosome is freed to recommence translation, which seems to be the essential function of trans-translation. The chain is SsrA-binding protein from Cereibacter sphaeroides (strain ATCC 17025 / ATH 2.4.3) (Rhodobacter sphaeroides).